A 192-amino-acid chain; its full sequence is Imidazoleglycerol-phosphate dehydratase (192 aa).

It belongs to the imidazoleglycerol-phosphate dehydratase family.

The protein localises to the cytoplasm. It catalyses the reaction D-erythro-1-(imidazol-4-yl)glycerol 3-phosphate = 3-(imidazol-4-yl)-2-oxopropyl phosphate + H2O. Its pathway is amino-acid biosynthesis; L-histidine biosynthesis; L-histidine from 5-phospho-alpha-D-ribose 1-diphosphate: step 6/9. The protein is Imidazoleglycerol-phosphate dehydratase of Staphylococcus epidermidis (strain ATCC 35984 / DSM 28319 / BCRC 17069 / CCUG 31568 / BM 3577 / RP62A).